Reading from the N-terminus, the 199-residue chain is Probable GTP-binding protein EngB (199 aa).

In terms of domain architecture, EngB-type G spans 28–199; sequence DLPEIALAGR…ESWDTILEYL (172 aa). GTP is bound by residues 36-43, 63-67, 81-84, 148-151, and 180-182; these read GRSNVGKS, GKTQL, DVPG, TKAD, and FSS. Mg(2+)-binding residues include Ser-43 and Thr-65.

It belongs to the TRAFAC class TrmE-Era-EngA-EngB-Septin-like GTPase superfamily. EngB GTPase family. Mg(2+) is required as a cofactor.

Functionally, necessary for normal cell division and for the maintenance of normal septation. This chain is Probable GTP-binding protein EngB, found in Streptococcus equi subsp. zooepidemicus (strain H70).